Consider the following 110-residue polypeptide: T cell receptor alpha variable 35 (110 aa).

The signal sequence occupies residues 1 to 19 (MLLEHLLIILWMQLTWVSG). An Ig-like domain is found at 20-110 (QQLNQSPQSM…DVGIYFCAGQ (91 aa)). N-linked (GlcNAc...) asparagine glycosylation is found at N40 and N93. C41 and C107 are joined by a disulfide.

As to quaternary structure, alpha-beta TR is a heterodimer composed of an alpha and beta chain; disulfide-linked. The alpha-beta TR is associated with the transmembrane signaling CD3 coreceptor proteins to form the TR-CD3 (TcR or TCR). The assembly of alpha-beta TR heterodimers with CD3 occurs in the endoplasmic reticulum where a single alpha-beta TR heterodimer associates with one CD3D-CD3E heterodimer, one CD3G-CD3E heterodimer and one CD247 homodimer forming a stable octameric structure. CD3D-CD3E and CD3G-CD3E heterodimers preferentially associate with TR alpha and TR beta chains, respectively. The association of the CD247 homodimer is the last step of TcR assembly in the endoplasmic reticulum and is required for transport to the cell surface.

It is found in the cell membrane. Functionally, v region of the variable domain of T cell receptor (TR) alpha chain that participates in the antigen recognition. Alpha-beta T cell receptors are antigen specific receptors which are essential to the immune response and are present on the cell surface of T lymphocytes. Recognize peptide-major histocompatibility (MH) (pMH) complexes that are displayed by antigen presenting cells (APC), a prerequisite for efficient T cell adaptive immunity against pathogens. Binding of alpha-beta TR to pMH complex initiates TR-CD3 clustering on the cell surface and intracellular activation of LCK that phosphorylates the ITAM motifs of CD3G, CD3D, CD3E and CD247 enabling the recruitment of ZAP70. In turn ZAP70 phosphorylates LAT, which recruits numerous signaling molecules to form the LAT signalosome. The LAT signalosome propagates signal branching to three major signaling pathways, the calcium, the mitogen-activated protein kinase (MAPK) kinase and the nuclear factor NF-kappa-B (NF-kB) pathways, leading to the mobilization of transcription factors that are critical for gene expression and essential for T cell growth and differentiation. The T cell repertoire is generated in the thymus, by V-(D)-J rearrangement. This repertoire is then shaped by intrathymic selection events to generate a peripheral T cell pool of self-MH restricted, non-autoaggressive T cells. Post-thymic interaction of alpha-beta TR with the pMH complexes shapes TR structural and functional avidity. This chain is T cell receptor alpha variable 35, found in Homo sapiens (Human).